The primary structure comprises 355 residues: MKRDIKDLLNPALRNIAVYKVDGGQEAAVKLNQNESPFDLPFWMKEQILEEFRLEPWNRYPDILPFRGMDAYADFLGVSRDSVIMSNGSNEMLYTIFLACLSPGKKILIPEPSFSLYEKIALLLQADIVSVPMQPSLDFDADSLIERAKQEKVDFIVLSTPNNPTGKSLASPDIARIVRECDAIVLVDEAYIEFSREHSVLALIEECPNLIVLRTMSKALALAGMRIGFAIANPLLMAEIAKPKIPFASSRFAEITLQHVLRYYYLVTDAVSYILGERERIYAELEGIASLDVFQSDTNFLIIRVPDAQKVFHALVSSGILVRNVSGYLLMENCLRFNIGLREENDQLLEKLKSL.

N6-(pyridoxal phosphate)lysine is present on Lys-218.

The protein belongs to the class-II pyridoxal-phosphate-dependent aminotransferase family. Histidinol-phosphate aminotransferase subfamily. In terms of assembly, homodimer. Requires pyridoxal 5'-phosphate as cofactor.

The enzyme catalyses L-histidinol phosphate + 2-oxoglutarate = 3-(imidazol-4-yl)-2-oxopropyl phosphate + L-glutamate. Its pathway is amino-acid biosynthesis; L-histidine biosynthesis; L-histidine from 5-phospho-alpha-D-ribose 1-diphosphate: step 7/9. This Chlorobium limicola (strain DSM 245 / NBRC 103803 / 6330) protein is Histidinol-phosphate aminotransferase.